The primary structure comprises 181 residues: uncharacterized protein (181 aa).

This is an uncharacterized protein from Acanthamoeba polyphaga (Amoeba).